Reading from the N-terminus, the 301-residue chain is Ribosomal protein L11 methyltransferase (301 aa).

S-adenosyl-L-methionine-binding residues include Thr152, Gly173, Asp195, and Asn236.

This sequence belongs to the methyltransferase superfamily. PrmA family.

Its subcellular location is the cytoplasm. It carries out the reaction L-lysyl-[protein] + 3 S-adenosyl-L-methionine = N(6),N(6),N(6)-trimethyl-L-lysyl-[protein] + 3 S-adenosyl-L-homocysteine + 3 H(+). Functionally, methylates ribosomal protein L11. The protein is Ribosomal protein L11 methyltransferase of Dictyoglomus thermophilum (strain ATCC 35947 / DSM 3960 / H-6-12).